Here is a 137-residue protein sequence, read N- to C-terminus: Actin-depolymerizing factor 7 (137 aa).

S6 is modified (phosphoserine). The 131-residue stretch at 7-137 (GMAVEDECKL…SFDIIKSRAL (131 aa)) folds into the ADF-H domain.

Belongs to the actin-binding proteins ADF family. Specifically expressed in pollen.

Its subcellular location is the cytoplasm. The protein localises to the cytoskeleton. Its function is as follows. Actin-depolymerizing protein. Severs actin filaments (F-actin) and binds to actin monomers. Binds monomeric actin (G-actin) with a marked preference for the ADP-loaded form and inhibits the rate of nucleotide exchange on G-actin. Required for pollen tube growth. Promotes turnover of longitudinal actin cables by severing actin filaments in pollen tubes. This chain is Actin-depolymerizing factor 7 (ADF7), found in Arabidopsis thaliana (Mouse-ear cress).